Here is a 430-residue protein sequence, read N- to C-terminus: Nacrein-like protein P2 (430 aa).

Residue Asn-27 is glycosylated (N-linked (GlcNAc...) asparagine). The Alpha-carbonic anhydrase domain maps to 33–429; that stretch reads AGFSYDRSIC…KNKVTVYKSF (397 aa). Zn(2+) is bound by residues His-132, His-134, and His-157. Residues 201-312 are disordered; that stretch reads DEPDDEECKR…GENGHKHGCR (112 aa). Over residues 207 to 219 the composition is skewed to basic and acidic residues; it reads ECKRILKGHHPDN. Over residues 220 to 304 the composition is skewed to low complexity; the sequence is NENGNGDNGN…NNGENGNNGE (85 aa). 27 repeat units span residues 225 to 227, 228 to 230, 231 to 233, 234 to 236, 237 to 239, 240 to 242, 243 to 245, 246 to 248, 249 to 251, 252 to 254, 255 to 257, 258 to 260, 261 to 263, 264 to 266, 267 to 269, 270 to 272, 273 to 275, 276 to 278, 279 to 281, 282 to 284, 285 to 287, 288 to 290, 291 to 293, 294 to 296, 297 to 299, 300 to 301, and 303 to 305. The segment at 225–305 is 27 X 3 AA approximate tandem repeats of G-X-N; that stretch reads GDNGNNGYNG…NGENGNNGEN (81 aa). A substrate-binding site is contributed by 370–371; sequence TT.

This sequence belongs to the alpha-carbonic anhydrase family. In terms of assembly, homooligomer; disulfide-linked. May also be disulfide-linked to insoluble organic matrix. Requires Zn(2+) as cofactor. As to expression, expressed in the mantle.

The protein localises to the secreted. It localises to the extracellular space. It is found in the extracellular matrix. The enzyme catalyses hydrogencarbonate + H(+) = CO2 + H2O. Acts as a negative regulator for calcification in the shells of mollusks. May function both as a calcium concentrator and as a carbonic anhydrase required for production of carbonate ions, which are assembled to CaCO(3) at mineralization sites. Is important for shell formation in both the calcitic prismatic layer and the aragonitic nacreous layer. Shows inhibitory activity of crystal formation when present in free state but, when attached to the insoluble matrix, may regulate the form and size of aragonite crystal. The polypeptide is Nacrein-like protein P2 (Mizuhopecten yessoensis (Japanese scallop)).